A 556-amino-acid chain; its full sequence is Serine beta-lactamase-like protein LACTB, mitochondrial (556 aa).

Residues 1–117 (MYRLLSAVMA…RAIDSSRDLL (117 aa)) constitute a mitochondrion transit peptide. Ser166 acts as the Acyl-ester intermediate in catalysis. Over residues 249–282 (ESDQEKELKEKGGKSNEKNDFAKAKVEQDNETKG) the composition is skewed to basic and acidic residues. Positions 249 to 290 (ESDQEKELKEKGGKSNEKNDFAKAKVEQDNETKGRNSKPCKK) are disordered. N6-succinyllysine is present on residues Lys290 and Lys291. N6-acetyllysine is present on residues Lys304 and Lys349.

It belongs to the peptidase S12 family.

The protein resides in the mitochondrion. Mitochondrial serine protease that acts as a regulator of mitochondrial lipid metabolism. Acts by decreasing protein levels of PISD, a mitochondrial enzyme that converts phosphatidylserine (PtdSer) to phosphatidylethanolamine (PtdEtn), thereby affecting mitochondrial lipid metabolism. It is unclear whether it acts directly by mediating proteolysis of PISD or by mediating proteolysis of another lipid metabolism protein. In Bos taurus (Bovine), this protein is Serine beta-lactamase-like protein LACTB, mitochondrial.